A 201-amino-acid chain; its full sequence is Peptide deformylase (201 aa).

The segment at Met-1–His-34 is disordered. Over residues Lys-23 to Lys-32 the composition is skewed to basic and acidic residues. Fe cation-binding residues include Cys-121 and His-163. Residue Glu-164 is part of the active site. A Fe cation-binding site is contributed by His-167.

Belongs to the polypeptide deformylase family. The cofactor is Fe(2+).

It catalyses the reaction N-terminal N-formyl-L-methionyl-[peptide] + H2O = N-terminal L-methionyl-[peptide] + formate. Removes the formyl group from the N-terminal Met of newly synthesized proteins. Requires at least a dipeptide for an efficient rate of reaction. N-terminal L-methionine is a prerequisite for activity but the enzyme has broad specificity at other positions. The chain is Peptide deformylase from Synechococcus sp. (strain RCC307).